The chain runs to 470 residues: MLEPLNEGLLSRISDVLLCGWTCQHCCQRCYESSCCQSSEDEVEILGPFPAQTPPWLMASRSNDKDGDSVHTASDVPLTPRTNSPDGRRSSSDTSKSTYSLTRRISSLDSRRPSSPLIDIKPVEFGVLSAKKESIQPSVLRRTYTPDDYFRKFEPRLYSLDSNLDDVDSLTDEEIMSKYQLGMLHFSTQYDLLHNHLTVRVIEARDLPPPISHDGSRQDMAHSNPYVKICLLPDQKNSKQTGVKRKTQKPVFEERYTFEIPFLEAQRRTLLLTVVDFDKFSRHCVIGKVAVPLCEVDLVKGGHWWKALIPSSQNEVELGELLLSLNYLPSAGRLNVDIIRAKQLLQTDVSQGSDPFVKIQLVHGLKLVKTKKTSFLRGTIDPFYNESFSFKVPQEELENASLVFTVFGHNMKSSNDFIGRIVIGQYSSGPSESNHWRRMLNTHRTAVEQWHSLRSRAECDRVSPASLEVT.

The tract at residues 54–112 (PPWLMASRSNDKDGDSVHTASDVPLTPRTNSPDGRRSSSDTSKSTYSLTRRISSLDSRR) is disordered. A compositionally biased stretch (low complexity) spans 92-112 (SDTSKSTYSLTRRISSLDSRR). Residues S114 and S115 each carry the phosphoserine modification. 2 C2 domains span residues 180–306 (QLGM…HWWK) and 317–451 (ELGE…EQWH).

It belongs to the synaptotagmin family.

The protein resides in the membrane. In terms of biological role, plays a role in dendrite formation by melanocytes. This Mus musculus (Mouse) protein is Synaptotagmin-17 (Syt17).